Reading from the N-terminus, the 451-residue chain is Rab GDP-dissociation inhibitor (451 aa).

Interaction with YPT1 stretches follow at residues 106–112 (RYVDFKQ) and 234–259 (YPMY…TYML).

This sequence belongs to the Rab GDI family. In terms of assembly, interacts with the GDP-bound form of Rab GTPase YPT1. Interacts with YPT10.

The protein localises to the cytoplasm. Its function is as follows. Regulates the GDP/GTP exchange reaction of SEC4 by inhibiting the dissociation of GDP from it, and the subsequent binding of GTP to SEC4. Plays an essential role in the yeast secretory pathway. Extracts GDP-bound YPT7 from vacuolar membranes, antagonizing vacuolar membrane fusion. The polypeptide is Rab GDP-dissociation inhibitor (GDI1) (Saccharomyces cerevisiae (strain ATCC 204508 / S288c) (Baker's yeast)).